Here is a 333-residue protein sequence, read N- to C-terminus: Auxiliary capsid protein (333 aa).

Positions 75–237 are FD; that stretch reads HKLVRYSVTL…ATVVTPTKTV (163 aa).

In terms of assembly, interacts (via FD region) with the major capsid protein.

It localises to the virion. Auxiliary capsid protein that forms an outer layer on the major capsid protein protrusions. The polypeptide is Auxiliary capsid protein (Bacteroides phage crAss001 (Bacteroides phage PhiCrAss001)).